We begin with the raw amino-acid sequence, 468 residues long: Cyclin-dependent kinase 14 (468 aa).

Phosphoserine is present on residues serine 24, serine 77, and serine 94. The disordered stretch occupies residues 103–132 (KTSSAGKESPKVRRHSSPSSPTSPKFGKAD). At serine 133 the chain carries Phosphoserine. The 285-residue stretch at 134–418 (YEKLEKLGEG…AQAALSHEYF (285 aa)) folds into the Protein kinase domain. Residues 140–148 (LGEGSYATV) and lysine 163 each bind ATP. Aspartate 255 serves as the catalytic Proton acceptor. The disordered stretch occupies residues 448–468 (ESMRAFGKNNSYGKSLSNSKH). The segment covering 455–468 (KNNSYGKSLSNSKH) has biased composition (polar residues).

It belongs to the protein kinase superfamily. CMGC Ser/Thr protein kinase family. CDC2/CDKX subfamily. Found in a complex with LRP6, CCNY and CAPRIN2 during G2/M stage; CAPRIN2 functions as a scaffold for the complex by binding to CCNY via its N terminus and to CDK14 via its C terminus. Interacts with CCNY; CCNY mediates its recruitment to the plasma membrane and promotes phosphorylation of LRP6. Interacts with CCDN3 and CDKN1A. Interacts with SEPT8. Interacts with 14-3-3 proteina YWHAB, YWHAE, YWHAH and YWHAQ.

Its subcellular location is the cell membrane. The protein resides in the cytoplasm. It localises to the nucleus. It catalyses the reaction L-seryl-[protein] + ATP = O-phospho-L-seryl-[protein] + ADP + H(+). The enzyme catalyses L-threonyl-[protein] + ATP = O-phospho-L-threonyl-[protein] + ADP + H(+). Serine/threonine-protein kinase activity is promoted by associated cyclins CCDN3 and CCNY and repressed by CDKN1A. Its function is as follows. Serine/threonine-protein kinase involved in the control of the eukaryotic cell cycle, whose activity is controlled by an associated cyclin. Acts as a cell-cycle regulator of Wnt signaling pathway during G2/M phase by mediating the phosphorylation of LRP6 at 'Ser-1490', leading to the activation of the Wnt signaling pathway. Acts as a regulator of cell cycle progression and cell proliferation via its interaction with CCDN3. Phosphorylates RB1 in vitro, however the relevance of such result remains to be confirmed in vivo. May also play a role in meiosis, neuron differentiation and may indirectly act as a negative regulator of insulin-responsive glucose transport. The protein is Cyclin-dependent kinase 14 (CDK14) of Dasypus novemcinctus (Nine-banded armadillo).